The sequence spans 155 residues: Microsomal glutathione S-transferase 1 (155 aa).

Residues 3-9 (DLKQLMD) are Lumenal-facing. The chain crosses the membrane as a helical span at residues 10–33 (NEVLMAFTSYATIILAKMMFLSSA). Over 34-62 (TAFQRLTNKVFANPEDCAGFGKGENAKKF) the chain is Cytoplasmic. Arg-38 lines the glutathione pocket. Lys-42, Lys-55, and Lys-60 each carry N6-acetyllysine. Residues 63-96 (LRTDEKVERVRRAHLNDLENIVPFLGIGLLYSLS) traverse the membrane as a helical segment. Positions 73, 74, 76, and 81 each coordinate glutathione. Tyr-93 bears the 3'-nitrotyrosine; in vitro mark. Topologically, residues 97-99 (GPD) are lumenal. The helical transmembrane segment at 100-123 (LSTALIHFRIFVGARIYHTIAYLT) threads the bilayer. Tyr-121 is a binding site for glutathione. Over 124 to 128 (PLPQP) the chain is Cytoplasmic. A helical membrane pass occupies residues 129-148 (NRGLAFFVGYGVTLSMAYRL). Over 149–155 (LRSRLYL) the chain is Lumenal.

The protein belongs to the MAPEG family. As to quaternary structure, homotrimer; The trimer binds only one molecule of glutathione. In vitro, peroxynitrite induces nitration at Tyr-93 which activates the enzyme. As to expression, highest in the liver, followed by kidney and testis and much lower in seminal vesicles, spleen, lung and brain.

It is found in the endoplasmic reticulum membrane. Its subcellular location is the mitochondrion outer membrane. The enzyme catalyses RX + glutathione = an S-substituted glutathione + a halide anion + H(+). With respect to regulation, in vitro, can be activated by reagents that attack Cys-50 sulfhydryl, such as N-ethylmaleimide and via nitration of Tyr-93 by peroxynitrite. In terms of biological role, conjugation of reduced glutathione to a wide number of exogenous and endogenous hydrophobic electrophiles. In Rattus norvegicus (Rat), this protein is Microsomal glutathione S-transferase 1 (Mgst1).